Here is a 226-residue protein sequence, read N- to C-terminus: Charged multivesicular body protein 5 (226 aa).

Residues 21–93 (IAGVDARATN…NQSFNMEQAN (73 aa)) adopt a coiled-coil conformation. A compositionally biased stretch (basic and acidic residues) spans 188 to 198 (KAPEAPSREPG). The disordered stretch occupies residues 188-226 (KAPEAPSREPGADSIVPGKSTIETDEFGLPKIPTSLKTT). At Ser-201 the chain carries Phosphoserine. Residue Thr-226 is modified to Phosphothreonine.

This sequence belongs to the SNF7 family. As to quaternary structure, probable peripherally associated component of the endosomal sorting required for transport complex III (ESCRT-III).

Its subcellular location is the endosome membrane. In terms of biological role, probable peripherally associated component of the endosomal sorting required for transport complex III (ESCRT-III) which is involved in multivesicular bodies (MVBs) formation and sorting of endosomal cargo proteins into MVBs. MVBs contain intraluminal vesicles (ILVs) that are generated by invagination and scission from the limiting membrane of the endosome and are delivered to lysosomes enabling degradation of membrane proteins. Specifically down-regulates Notch signaling activity in the germarium, probably by facilitating Notch endocytosis. This is Charged multivesicular body protein 5 from Drosophila melanogaster (Fruit fly).